We begin with the raw amino-acid sequence, 168 residues long: RNA pyrophosphohydrolase (168 aa).

A Nudix hydrolase domain is found at 8–159 (PYRTCVGVML…KRPVYERVVK (152 aa)). Positions 47 to 68 (GGVDPGEDTWKAAKRELYEETS) match the Nudix box motif.

It belongs to the Nudix hydrolase family. RppH subfamily. The cofactor is a divalent metal cation.

In terms of biological role, accelerates the degradation of transcripts by removing pyrophosphate from the 5'-end of triphosphorylated RNA, leading to a more labile monophosphorylated state that can stimulate subsequent ribonuclease cleavage. The protein is RNA pyrophosphohydrolase of Rhodopseudomonas palustris (strain ATCC BAA-98 / CGA009).